The primary structure comprises 361 residues: Protein RecA (361 aa).

77–84 (GPESSGKT) is an ATP binding site.

The protein belongs to the RecA family.

Its subcellular location is the cytoplasm. In terms of biological role, can catalyze the hydrolysis of ATP in the presence of single-stranded DNA, the ATP-dependent uptake of single-stranded DNA by duplex DNA, and the ATP-dependent hybridization of homologous single-stranded DNAs. It interacts with LexA causing its activation and leading to its autocatalytic cleavage. This Rhizobium rhizogenes (strain K84 / ATCC BAA-868) (Agrobacterium radiobacter) protein is Protein RecA.